A 559-amino-acid polypeptide reads, in one-letter code: S-layer protein (559 aa).

Positions 1 to 28 are cleaved as a signal peptide; sequence MAMSLKKIGAIAVGGAMVASALASGVMA. Residues Asn108, Asn130, Asn155, Asn222, and Asn373 are each glycosylated (N-linked (GlcNAc...) asparagine).

The protein belongs to the Mj S-layer protein family.

Its subcellular location is the secreted. It is found in the cell wall. The protein resides in the S-layer. S-layer protein. The S-layer is a paracrystalline mono-layered assembly of proteins which coat the surface of the cell. This chain is S-layer protein, found in Methanothermococcus thermolithotrophicus (Methanococcus thermolithotrophicus).